We begin with the raw amino-acid sequence, 204 residues long: Probable UMP-CMP kinase 1 (204 aa).

Residue 31-36 coordinates ATP; the sequence is GSGKGT. The NMP stretch occupies residues 51–80; it reads SAGDLLRAEIKSGSEFGAMIQSMIAEGRIV. A ribonucleoside 5'-phosphate contacts are provided by residues arginine 57, 78 to 80, and 105 to 108; these read RIV and GFPR. A CMP-binding site is contributed by asparagine 112. Residues 143–151 form an LID region; that stretch reads SRNQGREDD. Arginine 144 contacts ATP. A ribonucleoside 5'-phosphate-binding residues include arginine 148 and arginine 159. Lysine 187 is an ATP binding site.

Belongs to the adenylate kinase family. UMP-CMP kinase subfamily. Monomer. Mg(2+) serves as cofactor.

The protein resides in the cytoplasm. Its subcellular location is the nucleus. It catalyses the reaction CMP + ATP = CDP + ADP. The catalysed reaction is dCMP + ATP = dCDP + ADP. The enzyme catalyses UMP + ATP = UDP + ADP. In terms of biological role, catalyzes the phosphorylation of pyrimidine nucleoside monophosphates at the expense of ATP. Plays an important role in de novo pyrimidine nucleotide biosynthesis. Has preference for UMP and CMP as phosphate acceptors. This is Probable UMP-CMP kinase 1 (UMK1) from Arabidopsis thaliana (Mouse-ear cress).